We begin with the raw amino-acid sequence, 504 residues long: Arabinose import ATP-binding protein AraG (504 aa).

ABC transporter domains follow at residues 8–243 and 256–499; these read LSFR…MVGR and YGEE…MPKV. 40 to 47 is an ATP binding site; it reads GENGAGKS.

The protein belongs to the ABC transporter superfamily. Arabinose importer (TC 3.A.1.2.2) family. In terms of assembly, the complex is composed of two ATP-binding proteins (AraG), two transmembrane proteins (AraH) and a solute-binding protein (AraF).

The protein localises to the cell inner membrane. It carries out the reaction L-arabinose(out) + ATP + H2O = L-arabinose(in) + ADP + phosphate + H(+). Functionally, part of the ABC transporter complex AraFGH involved in arabinose import. Responsible for energy coupling to the transport system. The sequence is that of Arabinose import ATP-binding protein AraG from Shigella sonnei (strain Ss046).